Reading from the N-terminus, the 408-residue chain is Cytochrome P450 55A3 (408 aa).

Heme is bound at residue cysteine 357.

The protein belongs to the cytochrome P450 family. The cofactor is heme.

This Fusarium lichenicola (Cylindrocarpon lichenicola) protein is Cytochrome P450 55A3 (CYP55A3).